The chain runs to 260 residues: tRNA (guanine-N(7)-)-methyltransferase (260 aa).

The disordered stretch occupies residues 1–37 (MIHDPNDAGLPDQLPTPSSEAENSPAGDTTPPEEALH). Residues Glu90, Glu115, Asp142, and Asp165 each coordinate S-adenosyl-L-methionine. Asp165 is a catalytic residue. Substrate is bound by residues Lys169, Asp201, and 236–239 (TKFE).

It belongs to the class I-like SAM-binding methyltransferase superfamily. TrmB family.

The enzyme catalyses guanosine(46) in tRNA + S-adenosyl-L-methionine = N(7)-methylguanosine(46) in tRNA + S-adenosyl-L-homocysteine. It participates in tRNA modification; N(7)-methylguanine-tRNA biosynthesis. Catalyzes the formation of N(7)-methylguanine at position 46 (m7G46) in tRNA. In Paraburkholderia xenovorans (strain LB400), this protein is tRNA (guanine-N(7)-)-methyltransferase.